A 254-amino-acid polypeptide reads, in one-letter code: 5'-nucleotidase SurE (254 aa).

A divalent metal cation-binding residues include Asp-8, Asp-9, Ser-40, and Asn-93.

This sequence belongs to the SurE nucleotidase family. The cofactor is a divalent metal cation.

The protein localises to the cytoplasm. The enzyme catalyses a ribonucleoside 5'-phosphate + H2O = a ribonucleoside + phosphate. Functionally, nucleotidase that shows phosphatase activity on nucleoside 5'-monophosphates. This chain is 5'-nucleotidase SurE, found in Methylorubrum populi (strain ATCC BAA-705 / NCIMB 13946 / BJ001) (Methylobacterium populi).